The primary structure comprises 916 residues: Translation initiation factor IF-2 (916 aa).

The span at 151-191 shows a compositional bias: basic and acidic residues; the sequence is NLDEQQRLAESDRARDEAIQRKRDEEQAAKDRVEAERKAAE. 2 disordered regions span residues 151–262 and 280–328; these read NLDE…SHVM and HLSA…ERPT. 2 stretches are compositionally biased toward low complexity: residues 192 to 243 and 293 to 305; these read EAAA…ATPA and RGKPTGRPGSSSS. The region spanning 415-584 is the tr-type G domain; it reads SRPPVVTIMG…SLQAEVLELK (170 aa). Residues 424 to 431 form a G1 region; the sequence is GHVDHGKT. Residue 424–431 participates in GTP binding; that stretch reads GHVDHGKT. Positions 449–453 are G2; the sequence is GITQH. Residues 470–473 form a G3 region; that stretch reads DTPG. GTP contacts are provided by residues 470–474 and 524–527; these read DTPGH and NKID. Residues 524 to 527 are G4; that stretch reads NKID. Residues 560–562 form a G5 region; it reads SAK.

It belongs to the TRAFAC class translation factor GTPase superfamily. Classic translation factor GTPase family. IF-2 subfamily.

The protein localises to the cytoplasm. In terms of biological role, one of the essential components for the initiation of protein synthesis. Protects formylmethionyl-tRNA from spontaneous hydrolysis and promotes its binding to the 30S ribosomal subunits. Also involved in the hydrolysis of GTP during the formation of the 70S ribosomal complex. The sequence is that of Translation initiation factor IF-2 from Xanthomonas campestris pv. campestris (strain ATCC 33913 / DSM 3586 / NCPPB 528 / LMG 568 / P 25).